Reading from the N-terminus, the 214-residue chain is Octanoyltransferase (214 aa).

Positions 28 to 210 constitute a BPL/LPL catalytic domain; the sequence is GTAEDALYLL…EFGKVFTDTA (183 aa). Substrate-binding positions include 73–80, 140–142, and 153–155; these read RGGNITCH, SIG, and GLS. Cys171 functions as the Acyl-thioester intermediate in the catalytic mechanism.

The protein belongs to the LipB family.

It is found in the cytoplasm. The catalysed reaction is octanoyl-[ACP] + L-lysyl-[protein] = N(6)-octanoyl-L-lysyl-[protein] + holo-[ACP] + H(+). It participates in protein modification; protein lipoylation via endogenous pathway; protein N(6)-(lipoyl)lysine from octanoyl-[acyl-carrier-protein]: step 1/2. Catalyzes the transfer of endogenously produced octanoic acid from octanoyl-acyl-carrier-protein onto the lipoyl domains of lipoate-dependent enzymes. Lipoyl-ACP can also act as a substrate although octanoyl-ACP is likely to be the physiological substrate. The polypeptide is Octanoyltransferase (Maridesulfovibrio salexigens (strain ATCC 14822 / DSM 2638 / NCIMB 8403 / VKM B-1763) (Desulfovibrio salexigens)).